We begin with the raw amino-acid sequence, 80 residues long: Cell division protein ZapB (80 aa).

Residues 3–80 (FEVFEKLEAK…ALLGKMNEVN (78 aa)) are a coiled coil.

It belongs to the ZapB family. As to quaternary structure, homodimer. The ends of the coiled-coil dimer bind to each other, forming polymers. Interacts with FtsZ.

The protein localises to the cytoplasm. In terms of biological role, non-essential, abundant cell division factor that is required for proper Z-ring formation. It is recruited early to the divisome by direct interaction with FtsZ, stimulating Z-ring assembly and thereby promoting cell division earlier in the cell cycle. Its recruitment to the Z-ring requires functional FtsA or ZipA. The polypeptide is Cell division protein ZapB (Edwardsiella ictaluri (strain 93-146)).